A 333-amino-acid chain; its full sequence is Phenylalanine--tRNA ligase alpha subunit (333 aa).

Glu-254 contributes to the Mg(2+) binding site.

This sequence belongs to the class-II aminoacyl-tRNA synthetase family. Phe-tRNA synthetase alpha subunit type 1 subfamily. In terms of assembly, tetramer of two alpha and two beta subunits. Mg(2+) is required as a cofactor.

The protein resides in the cytoplasm. The catalysed reaction is tRNA(Phe) + L-phenylalanine + ATP = L-phenylalanyl-tRNA(Phe) + AMP + diphosphate + H(+). The polypeptide is Phenylalanine--tRNA ligase alpha subunit (pheS) (Xylella fastidiosa (strain 9a5c)).